The primary structure comprises 309 residues: Spermatid maturation protein 1 (309 aa).

Residues valine 29–leucine 49 traverse the membrane as a helical segment. Positions proline 209–glutamate 231 are disordered. The stretch at arginine 259–tyrosine 285 forms a coiled coil.

The protein localises to the membrane. It is found in the cytoplasm. Functionally, required for proper cytoplasm removal during spermatogenesis. In Homo sapiens (Human), this protein is Spermatid maturation protein 1 (SPEM1).